The primary structure comprises 2476 residues: Transcriptional regulator ATRX (2476 aa).

K10 participates in a covalent cross-link: Glycyl lysine isopeptide (Lys-Gly) (interchain with G-Cter in SUMO2). Residues H24–D154 form a disordered region. S25 and S34 each carry phosphoserine. Residues M40 to M57 show a composition bias toward polar residues. Residues E58–R72 show a composition bias toward basic and acidic residues. Y89 is modified (phosphotyrosine). S92 carries the post-translational modification Phosphoserine. A compositionally biased stretch (basic and acidic residues) spans T98–A107. A compositionally biased stretch (polar residues) spans T108–P121. At S111 the chain carries Phosphoserine. The span at N134–D154 shows a compositional bias: basic and acidic residues. Residues K137 and K141 each participate in a glycyl lysine isopeptide (Lys-Gly) (interchain with G-Cter in SUMO2) cross-link. An ADD domain is found at K158–K295. The GATA-type; atypical zinc finger occupies S169–S205. S212 carries the post-translational modification Phosphoserine. The PHD-type; atypical zinc finger occupies D216–P271. K298 participates in a covalent cross-link: Glycyl lysine isopeptide (Lys-Gly) (interchain with G-Cter in SUMO2). Phosphoserine is present on S315. 3 disordered regions span residues E427 to Y451, S466 to M507, and E525 to S568. Residue K439 forms a Glycyl lysine isopeptide (Lys-Gly) (interchain with G-Cter in SUMO2) linkage. Residues S466–S494 are compositionally biased toward basic and acidic residues. Positions E549–S559 are enriched in polar residues. Positions K573 to S586 match the PxVxL motif motif. T583 carries the post-translational modification Phosphothreonine. Disordered stretches follow at residues V585 to I877 and P893 to K1464. S586, S590, S626, S663, S665, S717, and S719 each carry phosphoserine. Residues S615–N630 show a composition bias toward basic and acidic residues. Residues M732–Q746 show a composition bias toward polar residues. A phosphoserine mark is found at S766, S801, S828, S829, S854, S855, and S871. The segment covering S819–T849 has biased composition (basic and acidic residues). A compositionally biased stretch (basic and acidic residues) spans G899–K922. Positions E923 to K937 are enriched in basic residues. A phosphoserine mark is found at S941 and S953. Residues G943–Q963 show a composition bias toward basic and acidic residues. The span at S964–K973 shows a compositional bias: basic residues. The segment covering K974–E988 has biased composition (basic and acidic residues). A Glycyl lysine isopeptide (Lys-Gly) (interchain with G-Cter in SUMO2) cross-link involves residue K984. Phosphoserine is present on residues S991, S992, S993, and S1041. A compositionally biased stretch (basic and acidic residues) spans D1031–K1061. Residues T1062 to F1074 show a composition bias toward basic residues. R1063 is modified (citrulline). Composition is skewed to basic and acidic residues over residues K1083 to L1096 and S1103 to K1129. Residues K1146–R1175 are compositionally biased toward basic residues. The interval L1169–S1313 is interaction with DAXX. Phosphoserine is present on residues S1223, S1224, and S1232. Positions P1246 to K1260 are enriched in basic and acidic residues. A compositionally biased stretch (acidic residues) spans S1265 to D1276. A phosphoserine mark is found at S1309, S1311, and S1313. The span at P1321–L1332 shows a compositional bias: basic residues. Phosphoserine occurs at positions 1335 and 1339. Basic and acidic residues-rich tracts occupy residues G1340–G1355 and K1395–R1404. The segment covering Y1406–I1415 has biased composition (basic residues). The span at K1416–G1436 shows a compositional bias: basic and acidic residues. The span at D1437–D1453 shows a compositional bias: acidic residues. K1473 participates in a covalent cross-link: Glycyl lysine isopeptide (Lys-Gly) (interchain with G-Cter in SUMO2). At S1512 the chain carries Phosphoserine. T1514 is modified (phosphothreonine). One can recognise a Helicase ATP-binding domain in the interval K1566 to N1753. Residue H1579 to T1586 coordinates ATP. The DEGH box signature appears at D1704–H1707. S1891 and S1898 each carry phosphoserine. A disordered region spans residues S1898–P1982. A compositionally biased stretch (basic and acidic residues) spans E1902–K1913. K1965 is covalently cross-linked (Glycyl lysine isopeptide (Lys-Gly) (interchain with G-Cter in SUMO1); alternate). A Glycyl lysine isopeptide (Lys-Gly) (interchain with G-Cter in SUMO2); alternate cross-link involves residue K1965. A Glycyl lysine isopeptide (Lys-Gly) (interchain with G-Cter in SUMO2) cross-link involves residue K1970. Residues T1971 to P1982 are compositionally biased toward low complexity. Phosphoserine occurs at positions 1975 and 1979. Positions D1993–A2263 are interaction with MECP2. In terms of domain architecture, Helicase C-terminal spans E2008 to T2188. S2203 is modified (phosphoserine). The disordered stretch occupies residues S2445–M2476. Residues Q2451–T2462 show a composition bias toward pro residues. An omega-N-methylarginine mark is found at R2457 and R2464.

Belongs to the SNF2/RAD54 helicase family. In terms of assembly, interacts with DAXX to form the chromatin remodeling complex ATRX:DAXX. Probably binds EZH2. Binds annexin V in a calcium and phosphatidylcholine/phosphatidylserine-dependent manner. Interacts directly with CBX5 via the PxVxL motif. Interacts with RAD50, MRE11 and NBN; indicative for an association with the MRN complex. Interacts with histone MACROH2A1. Interacts with histone H3 peptides methylated at 'Lys-10' with preferences H3K9me3 &gt; H3K9me2 &gt; H3K9me1. Interacts with histone H3 peptides unmethylated at 'Lys-5' (H3K4me0). Interacts with MECP2, SMC1 and SMC3. Interacts with SETDB1, TRIM28 and ZNF274. Post-translationally, citrullinated by PADI4.

It localises to the nucleus. The protein localises to the chromosome. Its subcellular location is the telomere. It is found in the PML body. The enzyme catalyses ATP + H2O = ADP + phosphate + H(+). Its function is as follows. Involved in transcriptional regulation and chromatin remodeling. Facilitates DNA replication in multiple cellular environments and is required for efficient replication of a subset of genomic loci. Binds to DNA tandem repeat sequences in both telomeres and euchromatin and in vitro binds DNA quadruplex structures. May help stabilizing G-rich regions into regular chromatin structures by remodeling G4 DNA and incorporating H3.3-containing nucleosomes. Catalytic component of the chromatin remodeling complex ATRX:DAXX which has ATP-dependent DNA translocase activity and catalyzes the replication-independent deposition of histone H3.3 in pericentric DNA repeats outside S-phase and telomeres, and the in vitro remodeling of H3.3-containing nucleosomes. Its heterochromatin targeting is proposed to involve a combinatorial readout of histone H3 modifications (specifically methylation states of H3K9 and H3K4) and association with CBX5. Involved in maintaining telomere structural integrity in embryonic stem cells probably implying recruitment of CBX5 to telomeres. Reports on the involvement in transcriptional regulation of telomeric repeat-containing RNA (TERRA) are conflicting; according is required for its transcriptional repression in embryonic stem cells. Acts as a negative regulator of chromatin incorporation of transcriptionally repressive histone MACROH2A1, particularily at telomeres. Participates in the allele-specific gene expression at the imprinted IGF2/H19 gene locus. On the maternal allele, required for the chromatin occupancy of SMC1 and CTCTF within the H19 imprinting control region (ICR) and involved in esatblishment of histone tails modifications in the ICR. Binds to zinc-finger coding genes with atypical chromatin signatures and regulates its H3K9me3 levels. Forms a complex with ZNF274, TRIM28 and SETDB1 to facilitate the deposition and maintenance of H3K9me3 at the 3' exons of zinc-finger genes. This is Transcriptional regulator ATRX (Atrx) from Mus musculus (Mouse).